The following is a 437-amino-acid chain: Phosphoglucosamine mutase (437 aa).

Serine 101 (phosphoserine intermediate) is an active-site residue. Residues serine 101, aspartate 234, aspartate 236, and aspartate 238 each contribute to the Mg(2+) site. Serine 101 is subject to Phosphoserine.

Belongs to the phosphohexose mutase family. It depends on Mg(2+) as a cofactor. In terms of processing, activated by phosphorylation.

It catalyses the reaction alpha-D-glucosamine 1-phosphate = D-glucosamine 6-phosphate. In terms of biological role, catalyzes the conversion of glucosamine-6-phosphate to glucosamine-1-phosphate. This chain is Phosphoglucosamine mutase, found in Thermus thermophilus (strain ATCC BAA-163 / DSM 7039 / HB27).